The sequence spans 912 residues: Phosphoenolpyruvate carboxylase (912 aa).

Active-site residues include His138 and Lys575.

This sequence belongs to the PEPCase type 1 family. It depends on Mg(2+) as a cofactor.

The catalysed reaction is oxaloacetate + phosphate = phosphoenolpyruvate + hydrogencarbonate. Forms oxaloacetate, a four-carbon dicarboxylic acid source for the tricarboxylic acid cycle. The polypeptide is Phosphoenolpyruvate carboxylase (Lactobacillus helveticus (strain DPC 4571)).